A 190-amino-acid chain; its full sequence is Adenylate kinase (190 aa).

12 to 17 lines the ATP pocket; the sequence is GSGKTT. An NMP region spans residues 33–62; sequence STGDLLRAEVASGSELGKTIDSFISKGNLV. Residues Thr34, Arg39, 60–62, 87–90, and Gln94 contribute to the AMP site; these read NLV and GYPR. An LID region spans residues 129–135; sequence GRARGAD. Arg130 provides a ligand contact to ATP. 2 residues coordinate AMP: Arg132 and Arg144. Arg172 contributes to the ATP binding site.

Belongs to the adenylate kinase family. As to quaternary structure, monomer.

The protein localises to the cytoplasm. The catalysed reaction is AMP + ATP = 2 ADP. The protein operates within purine metabolism; AMP biosynthesis via salvage pathway; AMP from ADP: step 1/1. Catalyzes the reversible transfer of the terminal phosphate group between ATP and AMP. Plays an important role in cellular energy homeostasis and in adenine nucleotide metabolism. The protein is Adenylate kinase of Campylobacter lari (strain RM2100 / D67 / ATCC BAA-1060).